A 593-amino-acid polypeptide reads, in one-letter code: Vitamin H transporter (593 aa).

Topologically, residues 1–121 are extracellular; sequence MTISNKSWRS…TTQTKAERRL (121 aa). Phosphoserine occurs at positions 32, 33, and 43. The helical transmembrane segment at 122–142 threads the bilayer; that stretch reads LYKLDIIIALYFFMLCWSKSV. At 143 to 166 the chain is on the cytoplasmic side; it reads DLNNYTNAYVSNMKEDLNMKGNDY. A helical transmembrane segment spans residues 167-187; it reads VYTSTIANVGAIVFQLPFMYL. The Extracellular segment spans residues 188–190; it reads LPR. A helical transmembrane segment spans residues 191–211; sequence FPSHIILPVMDLGWTWFTFAC. Over 212–224 the chain is Cytoplasmic; that stretch reads YRANSLAELRAYR. Residues 225–245 traverse the membrane as a helical segment; sequence FILSAFGAAYYPVSQYILGCW. Residues 246-291 are Extracellular-facing; sequence YAPDEINSRVCLFFCGQQLGSVTSGLLQSRIFKSLNGVHGLAGWRW. Residues 292–312 traverse the membrane as a helical segment; sequence MFLIDAIAISLPTAIIGFFVI. Residues 313 to 361 are Cytoplasmic-facing; that stretch reads PGVPSKCYSLFLTDEEIRIARARNKRNQIKDGVDKSKLAPLWSRKLWKK. A helical membrane pass occupies residues 362 to 382; it reads VFCTPAFWVLVVFDTCSWNNM. Residues 383–408 are Extracellular-facing; sequence TAYSGSYTLWLKSNTKYSIAQVNNLS. Residues 409–429 form a helical membrane-spanning segment; that stretch reads VIPACLGFAYVIFCAFGADLF. The Cytoplasmic portion of the chain corresponds to 430–432; it reads RCK. Residues 433-453 traverse the membrane as a helical segment; the sequence is WIFMVFAAIMNTVSCALLIKW. Residues 454–460 are Extracellular-facing; that stretch reads DIPSKAK. The helical transmembrane segment at 461-481 threads the bilayer; it reads WYAFFTTYFSVAASPCLWSFI. The Cytoplasmic portion of the chain corresponds to 482 to 492; that stretch reads NDFLRFDPQVK. Residues 493 to 513 traverse the membrane as a helical segment; it reads AITWIAIYSFSQSTYAWIPTL. The Extracellular segment spans residues 514–526; that stretch reads AWPTVESPRFKTG. Residues 527–547 traverse the membrane as a helical segment; that stretch reads YTVSLIFGAIYGLWTFVVLFF. Topologically, residues 548-593 are cytoplasmic; the sequence is YKRNEKKHALGNGIILYDSNKGEELPEFVKKNMEERDGYYYLKRSS.

This sequence belongs to the major facilitator superfamily. Allantoate permease family.

Its subcellular location is the cell membrane. Involved in uptake of biotin with the concomitant entry of protons. In Saccharomyces cerevisiae (strain ATCC 204508 / S288c) (Baker's yeast), this protein is Vitamin H transporter (VHT1).